The chain runs to 120 residues: U13-barytoxin-Tl1a (120 aa).

Residues 1–20 (MKTIIVFLSLLVLATKFGDA) form the signal peptide. 3 cysteine pairs are disulfide-bonded: C75-C90, C82-C95, and C89-C109.

Belongs to the neurotoxin 14 (magi-1) family. 05 (ICK-7) subfamily. ICK-7 sub-subfamily. As to expression, expressed by the venom gland.

It localises to the secreted. In terms of biological role, ion channel inhibitor. In Trittame loki (Brush-footed trapdoor spider), this protein is U13-barytoxin-Tl1a.